The chain runs to 524 residues: Serine/threonine-protein kinase PAK 2 (524 aa).

Residues 1 to 81 (MSDNGELEDK…PEISPPSDFE (81 aa)) form a disordered region. S2 bears the N-acetylserine mark. 4 positions are modified to phosphoserine: S2, S20, S55, and S58. T60 carries the phosphothreonine modification. An N6-acetyllysine modification is found at K62. S64 is modified (phosphoserine). Basic and acidic residues predominate over residues 67-81 (KEKERPEISPPSDFE). Residues 69-112 (KERPEISPPSDFEHTIHVGFDAVTGEFTGMPEQWARLLQTSNIT) form a GTPase-binding region. Residues 69–137 (KERPEISPPS…KFYDSNTVKQ (69 aa)) form an autoregulatory region region. A CRIB domain is found at 74 to 87 (ISPPSDFEHTIHVG). Position 128 is an N6-acetyllysine (K128). A Phosphothreonine modification is found at T134. Position 139 is a phosphotyrosine (Y139). S141 bears the Phosphoserine mark. The interval 142–188 (FTPPEKDGFPSGTPALNTKGSETSAVVTEEDDDDEDAAPPVIAPRPD) is disordered. Phosphothreonine is present on T143. A Phosphoserine modification is found at S152. Phosphothreonine occurs at positions 154, 159, and 169. Positions 155-167 (PALNTKGSETSAV) are enriched in polar residues. Residues 169–178 (TEEDDDDEDA) show a composition bias toward acidic residues. Phosphoserine is present on S197. The interval 204–228 (APVGDSNVDSGAKSSDKQKKKAKMT) is disordered. Positions 245 to 251 (PKKKYTR) match the Nuclear localization signal motif. The Protein kinase domain maps to 249 to 499 (YTRYEKIGQG…SAKELLQHPF (251 aa)). ATP is bound by residues 255 to 263 (IGQGASGTV) and K278. R367 (proton acceptor) is an active-site residue. At T402 the chain carries Phosphothreonine; by autocatalysis.

This sequence belongs to the protein kinase superfamily. STE Ser/Thr protein kinase family. STE20 subfamily. In terms of assembly, interacts tightly with GTP-bound but not GDP-bound CDC42/p21 and RAC1. Interacts with SH3MD4. Interacts with SCRIB. Interacts with ARHGEF7 and GIT1. PAK-2p34 interacts with ARHGAP10. Interacts with RAC1. In terms of processing, full-length PAK2 is autophosphorylated when activated by CDC42/p21. Following cleavage, both peptides, PAK-2p27 and PAK-2p34, become highly autophosphorylated. Autophosphorylation of PAK-2p27 can occur in the absence of any effectors and is dependent on phosphorylation of Thr-402, because PAK-2p27 is acting as an exogenous substrate. During apoptosis proteolytically cleaved by caspase-3 or caspase-3-like proteases to yield active PAK-2p34. Post-translationally, ubiquitinated, leading to its proteasomal degradation.

It is found in the cytoplasm. Its subcellular location is the nucleus. The protein localises to the perinuclear region. The protein resides in the membrane. The enzyme catalyses L-seryl-[protein] + ATP = O-phospho-L-seryl-[protein] + ADP + H(+). The catalysed reaction is L-threonyl-[protein] + ATP = O-phospho-L-threonyl-[protein] + ADP + H(+). Its activity is regulated as follows. Activated by binding small G proteins. Binding of GTP-bound CDC42 or RAC1 to the autoregulatory region releases monomers from the autoinhibited dimer, enables phosphorylation of Thr-402 and allows the kinase domain to adopt an active structure. Following caspase cleavage, autophosphorylated PAK-2p34 is constitutively active. Functionally, serine/threonine protein kinase that plays a role in a variety of different signaling pathways including cytoskeleton regulation, cell motility, cell cycle progression, apoptosis or proliferation. Acts as a downstream effector of the small GTPases CDC42 and RAC1. Activation by the binding of active CDC42 and RAC1 results in a conformational change and a subsequent autophosphorylation on several serine and/or threonine residues. Full-length PAK2 stimulates cell survival and cell growth. Phosphorylates MAPK4 and MAPK6 and activates the downstream target MAPKAPK5, a regulator of F-actin polymerization and cell migration. Phosphorylates JUN and plays an important role in EGF-induced cell proliferation. Phosphorylates many other substrates including histone H4 to promote assembly of H3.3 and H4 into nucleosomes, BAD, ribosomal protein S6, or MBP. Phosphorylates CASP7, thereby preventing its activity. Additionally, associates with ARHGEF7 and GIT1 to perform kinase-independent functions such as spindle orientation control during mitosis. On the other hand, apoptotic stimuli such as DNA damage lead to caspase-mediated cleavage of PAK2, generating PAK-2p34, an active p34 fragment that translocates to the nucleus and promotes cellular apoptosis involving the JNK signaling pathway. Caspase-activated PAK2 phosphorylates MKNK1 and reduces cellular translation. The sequence is that of Serine/threonine-protein kinase PAK 2 (Pak2) from Mus musculus (Mouse).